A 405-amino-acid chain; its full sequence is Tryptophan synthase beta chain (405 aa).

Lys-98 is subject to N6-(pyridoxal phosphate)lysine.

It belongs to the TrpB family. Tetramer of two alpha and two beta chains. It depends on pyridoxal 5'-phosphate as a cofactor.

It catalyses the reaction (1S,2R)-1-C-(indol-3-yl)glycerol 3-phosphate + L-serine = D-glyceraldehyde 3-phosphate + L-tryptophan + H2O. It participates in amino-acid biosynthesis; L-tryptophan biosynthesis; L-tryptophan from chorismate: step 5/5. The beta subunit is responsible for the synthesis of L-tryptophan from indole and L-serine. This is Tryptophan synthase beta chain from Bradyrhizobium diazoefficiens (strain JCM 10833 / BCRC 13528 / IAM 13628 / NBRC 14792 / USDA 110).